The following is a 662-amino-acid chain: Sodium/glucose cotransporter 1 (662 aa).

The Extracellular segment spans residues 1-24 (MDSSTWSPATTATTEPLKPHERIR). The chain crosses the membrane as a helical span at residues 25 to 47 (NAADISVIVIYFVVVMAVGLWAM). At 48–66 (CSTNRGTVGGFFLAGRSMV) the chain is on the cytoplasmic side. Residues 67-90 (WWPVGASLFASNIGSGHFVGLAGT) traverse the membrane as a helical segment. At 91–95 (GAAAG) the chain is on the extracellular side. The chain crosses the membrane as a helical span at residues 96–117 (IATGGFEWNALIWVVVLGWLFV). Residues 118–139 (PIYIKAGVVTMPEYLRKRFGGK) are Cytoplasmic-facing. The helical transmembrane segment at 140–169 (RIQVYLSILSLMLYIFTKISADIFSGAIFI) threads the bilayer. The Extracellular portion of the chain corresponds to 170-176 (TLALGLD). A helical membrane pass occupies residues 177–193 (LYLAIFLLLAITGLYTI). The Cytoplasmic portion of the chain corresponds to 194–202 (TGGLAAVIY). Residues 203–221 (TDTLQTAIMLVGSFILTGF) form a helical membrane-spanning segment. Topologically, residues 222-275 (AFHEVGGYDAFMEKYMNAIPTVISDGNITIKKECYTPRADSFHIFRDPLKGDLP) are extracellular. An N-linked (GlcNAc...) asparagine glycan is attached at N248. Disulfide bonds link C255/C511, C255/C608, C345/C351, C355/C361, and C517/C522. The chain crosses the membrane as a helical span at residues 276–295 (WPGLTFGLSILALWYWCTDQ). Residues 296–309 (VIVQRCLSAKNMSH) lie on the Cytoplasmic side of the membrane. Residues 310 to 331 (VKAGCVMCGYFKLLPMFVIVMP) form a helical membrane-spanning segment. At 332–375 (GMISRVLYTEKIACTVPSECEKYCGTKVGCSNIAYPTLVVELMP) the chain is on the extracellular side. The helical transmembrane segment at 376–406 (NGLRGLMLSVMLASLMSSLTSIFNSASTLFT) threads the bilayer. The Cytoplasmic segment spans residues 407 to 422 (MDVYTKIRKRASEKEL). Residues 423-444 (MIAGRLFILVLIGISIAWVPIV) traverse the membrane as a helical segment. At 445–451 (QSAQSGQ) the chain is on the extracellular side. A helical membrane pass occupies residues 452-477 (LFDYIQSVTSYLGPPIAAVFLLAIFC). At 478 to 481 (KRVN) the chain is on the cytoplasmic side. The chain crosses the membrane as a helical span at residues 482–504 (EEGAFWGLVIGCMIGLARMITEF). At 505–525 (AYGTGSCVEPSNCPTIICGVH) the chain is on the extracellular side. A helical transmembrane segment spans residues 526–547 (YLYFAIILFVISIIIVLVVSLF). Topologically, residues 548–642 (TKPIPDVHLY…TSEKPLWRTV (95 aa)) are cytoplasmic. T587 carries the phosphothreonine modification. Residues 643-660 (VNINGIILLTVAVFCHAY) form a helical membrane-spanning segment. The Extracellular portion of the chain corresponds to 661 to 662 (FA).

Belongs to the sodium:solute symporter (SSF) (TC 2.A.21) family. N-glycosylation is not necessary for the cotransporter function.

Its subcellular location is the apical cell membrane. It catalyses the reaction D-glucose(out) + 2 Na(+)(out) = D-glucose(in) + 2 Na(+)(in). The enzyme catalyses D-galactose(out) + 2 Na(+)(out) = D-galactose(in) + 2 Na(+)(in). Its activity is regulated as follows. Enhanced by the interaction with PDZK1IP1/MAP17; but unlike SLC5A2/SGLT2, PDZK1IP1 is not essential for SLC5A1 transporter activity. Possibly modulated by cholesterol binding. Electrogenic Na(+)-coupled sugar symporter that actively transports D-glucose or D-galactose at the plasma membrane, with a Na(+) to sugar coupling ratio of 2:1. Transporter activity is driven by a transmembrane Na(+) electrochemical gradient set by the Na(+)/K(+) pump. Has a primary role in the transport of dietary monosaccharides from enterocytes to blood. Responsible for the absorption of D-glucose or D-galactose across the apical brush-border membrane of enterocytes, whereas basolateral exit is provided by GLUT2. Additionally, functions as a D-glucose sensor in enteroendocrine cells, triggering the secretion of the incretins GCG and GIP that control food intake and energy homeostasis. Together with SGLT2, functions in reabsorption of D-glucose from glomerular filtrate, playing a nonredundant role in the S3 segment of the proximal tubules. Transports D-glucose into endometrial epithelial cells, controlling glycogen synthesis and nutritional support for the embryo as well as the decidual transformation of endometrium prior to conception. Acts as a water channel enabling passive water transport in response to the osmotic gradient created upon sugar and Na(+) uptake. Has high water conductivity comparable to aquaporins and therefore is expected to play an important role in transepithelial water permeability, especially in the small intestine. This chain is Sodium/glucose cotransporter 1 (SLC5A1), found in Sus scrofa (Pig).